A 147-amino-acid polypeptide reads, in one-letter code: 3-dehydroquinate dehydratase (147 aa).

Residue tyrosine 26 is the Proton acceptor of the active site. Positions 77, 83, and 90 each coordinate substrate. Histidine 103 functions as the Proton donor in the catalytic mechanism. Substrate contacts are provided by residues 104–105 and arginine 114; that span reads LS.

This sequence belongs to the type-II 3-dehydroquinase family. In terms of assembly, homododecamer.

It catalyses the reaction 3-dehydroquinate = 3-dehydroshikimate + H2O. It functions in the pathway metabolic intermediate biosynthesis; chorismate biosynthesis; chorismate from D-erythrose 4-phosphate and phosphoenolpyruvate: step 3/7. In terms of biological role, catalyzes a trans-dehydration via an enolate intermediate. The sequence is that of 3-dehydroquinate dehydratase from Proteus mirabilis (strain HI4320).